The primary structure comprises 411 residues: Citrate synthase (411 aa).

Catalysis depends on residues H304 and D363.

It belongs to the citrate synthase family.

The catalysed reaction is oxaloacetate + acetyl-CoA + H2O = citrate + CoA + H(+). It functions in the pathway carbohydrate metabolism; tricarboxylic acid cycle; isocitrate from oxaloacetate: step 1/2. The protein is Citrate synthase (gltA) of Rickettsia helvetica.